The primary structure comprises 366 residues: tRNA/tmRNA (uracil-C(5))-methyltransferase (366 aa).

S-adenosyl-L-methionine contacts are provided by Gln190, Tyr218, Asn223, Glu239, and Asp299. Cys324 (nucleophile) is an active-site residue. Glu358 functions as the Proton acceptor in the catalytic mechanism.

Belongs to the class I-like SAM-binding methyltransferase superfamily. RNA M5U methyltransferase family. TrmA subfamily.

The enzyme catalyses uridine(54) in tRNA + S-adenosyl-L-methionine = 5-methyluridine(54) in tRNA + S-adenosyl-L-homocysteine + H(+). It catalyses the reaction uridine(341) in tmRNA + S-adenosyl-L-methionine = 5-methyluridine(341) in tmRNA + S-adenosyl-L-homocysteine + H(+). Functionally, dual-specificity methyltransferase that catalyzes the formation of 5-methyluridine at position 54 (m5U54) in all tRNAs, and that of position 341 (m5U341) in tmRNA (transfer-mRNA). The sequence is that of tRNA/tmRNA (uracil-C(5))-methyltransferase from Escherichia coli O6:H1 (strain CFT073 / ATCC 700928 / UPEC).